The following is a 664-amino-acid chain: DNA ligase (664 aa).

NAD(+) contacts are provided by residues 32–36 and 80–81; these read DKEYD and SL. Lys-122 functions as the N6-AMP-lysine intermediate in the catalytic mechanism. NAD(+) is bound by residues Arg-144, Glu-178, and Lys-314. 4 residues coordinate Zn(2+): Cys-407, Cys-410, Cys-423, and Cys-429. Positions 587–664 constitute a BRCT domain; it reads IDENPFMDKT…NEEEFSNKIK (78 aa).

Belongs to the NAD-dependent DNA ligase family. LigA subfamily. Requires Mg(2+) as cofactor. Mn(2+) serves as cofactor.

It catalyses the reaction NAD(+) + (deoxyribonucleotide)n-3'-hydroxyl + 5'-phospho-(deoxyribonucleotide)m = (deoxyribonucleotide)n+m + AMP + beta-nicotinamide D-nucleotide.. DNA ligase that catalyzes the formation of phosphodiester linkages between 5'-phosphoryl and 3'-hydroxyl groups in double-stranded DNA using NAD as a coenzyme and as the energy source for the reaction. It is essential for DNA replication and repair of damaged DNA. The protein is DNA ligase of Clostridium botulinum (strain ATCC 19397 / Type A).